The sequence spans 341 residues: Gibberellin 2-beta-dioxygenase 5 (341 aa).

Residues 187 to 290 (REETCFLRLN…RFSMAFFLCP (104 aa)) form the Fe2OG dioxygenase domain. Tyrosine 198 is a 2-oxoglutarate binding site. Residues histidine 213, aspartate 215, and histidine 271 each contribute to the Fe cation site. Arginine 281 and serine 283 together coordinate 2-oxoglutarate.

This sequence belongs to the iron/ascorbate-dependent oxidoreductase family. GA2OX subfamily. L-ascorbate is required as a cofactor. Fe(2+) serves as cofactor. In terms of tissue distribution, expressed in roots, leaves, culms, leaf sheaths and young panicles.

It is found in the cytoplasm. The protein resides in the nucleus. The enzyme catalyses gibberellin A1 + 2-oxoglutarate + O2 = gibberellin A8 + succinate + CO2. It functions in the pathway plant hormone biosynthesis; gibberellin biosynthesis. Functionally, catalyzes the 2-beta-hydroxylation of several biologically active gibberellins (GAs), leading to the homeostatic regulation of their endogenous level. Catabolism of GAs plays a central role in plant development. In vitro, converts GA12 and GA53 to the corresponding 2-beta-hydroxylated products GA110 and GA97, respectively. The chain is Gibberellin 2-beta-dioxygenase 5 from Oryza sativa subsp. japonica (Rice).